The sequence spans 1075 residues: Nuclear factor of activated T-cells, cytoplasmic 3 (1075 aa).

N-acetylthreonine is present on Thr2. The interval 18 to 37 (FGEDGAPAPPPPGSRPADLE) is disordered. A calcineurin-binding region spans residues 109 to 114 (PSIQIT). The tract at residues 205 to 306 (LGSPLTSPGG…PGHSPRGSVT (102 aa)) is disordered. Repeat copies occupy residues 207–223 (SPLT…PGEE) and 236–252 (SPRQ…VTDE). Residues 207–308 (SPLTSPGGSP…HSPRGSVTED (102 aa)) are 3 X SP repeats. The segment covering 236 to 253 (SPRQSPCHSPRSSVTDEN) has biased composition (polar residues). The segment covering 256-270 (SPRPASGPSSRPTSP) has biased composition (low complexity). Residues 273-275 (KRR) carry the Nuclear localization signal motif. Repeat 3 spans residues 292-308 (SPVPSPGHSPRGSVTED). Phosphoserine occurs at positions 344 and 372. The RHD domain maps to 415 to 596 (SSLPPLDWPL…IPVECSQRSA (182 aa)). A DNA-binding region spans residues 444 to 451 (RAHYETEG). The Nuclear localization signal motif lies at 686 to 688 (KRK). 2 disordered regions span residues 711–739 (DLSS…SHDS) and 887–988 (SNTG…GLSA). Composition is skewed to polar residues over residues 724–739 (AQTQ…SHDS) and 887–912 (SNTG…QLQP). Low complexity-rich tracts occupy residues 916–939 (GPSH…SSPL) and 949–967 (PMPY…SPAT). Residues 970–981 (HSGQHSTQAQST) show a composition bias toward polar residues. A Nuclear export signal motif is present at residues 1032–1041 (TLDDVNEIIG). The tract at residues 1049–1075 (VSQGAGVSRQAPLPSPESLDLGRSDGL) is disordered. Phosphoserine occurs at positions 1063 and 1066.

NFATC proteins bind to DNA as monomers. Member of the multicomponent NFATC transcription complex that consists of at least two components, a pre-existing cytoplasmic component NFATC2 and an inducible nuclear component NFATC1. Other members such as NFATC4, or members of the activating protein-1 family, MAF, GATA4 and Cbp/p300 can also bind the complex. Component of a promoter-binding complex composed of STAT3, NFATC3 and NFATC4; complex formation is enhanced by calcineurin. Interacts with TRIM17; this interaction prevents NFATC3 nuclear localization. Interacts with and ubiquitinated by STUB1/CHIP; HSPA1A/HSP70 is required as a co-chaperone. In terms of processing, ubiquitinated by STUB1/CHIP, leading to proteasomal degradation. Post-translationally, phosphorylated by NFATC-kinase; dephosphorylated by calcineurin. Predominantly expressed in thymus and is also found in peripheral blood leukocytes and kidney. As to expression, predominantly expressed in skeletal muscle. Also found weakly expressed in the thymus, kidney, testis, spleen, prostate, ovary, small intestine, heart, placenta and pancreas. In terms of tissue distribution, expressed in thymus and kidney. Expressed in thymus and skeletal muscle.

It localises to the cytoplasm. The protein resides in the nucleus. In terms of biological role, acts as a regulator of transcriptional activation. Binds to the TNFSF11/RANKL promoter region and promotes TNFSF11 transcription. Binding to the TNFSF11 promoter region is increased by high levels of Ca(2+) which induce NFATC3 expression and may lead to regulation of TNFSF11 expression in osteoblasts. Plays a role in promoting mesenteric arterial wall remodeling in response to the intermittent hypoxia-induced increase in EDN1 and ROCK signaling. As a result NFATC3 colocalizes with F-actin filaments, translocates to the nucleus and promotes transcription of the smooth muscle hypertrophy and differentiation marker ACTA2. Promotes lipopolysaccharide-induced apoptosis and hypertrophy in cardiomyocytes. Following JAK/STAT signaling activation and as part of a complex with NFATC4 and STAT3, binds to the alpha-beta E4 promoter region of CRYAB and activates transcription in cardiomyocytes. In conjunction with NFATC4, involved in embryonic heart development via maintenance of cardiomyocyte survival, proliferation and differentiation. Plays a role in the inducible expression of cytokine genes in T-cells, especially in the induction of the IL-2. Required for thymocyte maturation during DN3 to DN4 transition and during positive selection. Positively regulates macrophage-derived polymicrobial clearance, via binding to the promoter region and promoting transcription of NOS2 resulting in subsequent generation of nitric oxide. Involved in Ca(2+)-mediated transcriptional responses upon Ca(2+) influx via ORAI1 CRAC channels. In Homo sapiens (Human), this protein is Nuclear factor of activated T-cells, cytoplasmic 3.